Here is a 275-residue protein sequence, read N- to C-terminus: Succinate dehydrogenase [ubiquinone] iron-sulfur subunit, mitochondrial (275 aa).

The transit peptide at 1-24 (MFSRRIQVLSPFLKHFVNRNARMM) directs the protein to the mitochondrion. The 81-residue stretch at 57–137 (PEVKPKLQKY…PTKIYPLPHC (81 aa)) folds into the 2Fe-2S ferredoxin-type domain. The [2Fe-2S] cluster site is built by Cys98, Cys103, Cys106, and Cys118. Residues 178–208 (DRAKLDGLYECILCACCSTSCPSYWWNSEEY) form the 4Fe-4S ferredoxin-type domain. [4Fe-4S] cluster is bound by residues Cys188, Cys191, and Cys194. Cys198 serves as a coordination point for [3Fe-4S] cluster. A ubiquinone is bound at residue Trp203. Positions 245 and 251 each coordinate [3Fe-4S] cluster. Position 255 (Cys255) interacts with [4Fe-4S] cluster.

The protein belongs to the succinate dehydrogenase/fumarate reductase iron-sulfur protein family. As to quaternary structure, component of complex II composed of four subunits: a flavoprotein (FP), an iron-sulfur protein (IP), and a cytochrome b composed of a large and a small subunit. Requires [2Fe-2S] cluster as cofactor. The cofactor is [3Fe-4S] cluster. [4Fe-4S] cluster serves as cofactor.

It is found in the mitochondrion inner membrane. It carries out the reaction a quinone + succinate = fumarate + a quinol. Its pathway is carbohydrate metabolism; tricarboxylic acid cycle; fumarate from succinate (eukaryal route): step 1/1. Functionally, iron-sulfur protein (IP) subunit of succinate dehydrogenase (SDH) that is involved in complex II of the mitochondrial electron transport chain and is responsible for transferring electrons from succinate to ubiquinone (coenzyme Q). In Schizosaccharomyces pombe (strain 972 / ATCC 24843) (Fission yeast), this protein is Succinate dehydrogenase [ubiquinone] iron-sulfur subunit, mitochondrial (sdh2).